A 269-amino-acid polypeptide reads, in one-letter code: Protein MrkE (269 aa).

A Response regulatory domain is found at Lys59 to Thr173. At Asp110 the chain carries 4-aspartylphosphate. In terms of domain architecture, HTH LytTR-type spans Ile197 to Phe269.

May be involved in the regulation of fimbrial expression. This Klebsiella pneumoniae protein is Protein MrkE (mrkE).